Reading from the N-terminus, the 283-residue chain is Phosphatidylglycerol--prolipoprotein diacylglyceryl transferase (283 aa).

7 consecutive transmembrane segments (helical) span residues 21-41 (LAIR…LWLA), 60-80 (LLFA…VLFY), 95-115 (VWTG…AMLW), 124-144 (FFTI…AGRL), 176-196 (SQLY…NWFI), 203-223 (GAVS…VEYV), and 239-259 (MGQI…VWAF). R143 provides a ligand contact to a 1,2-diacyl-sn-glycero-3-phospho-(1'-sn-glycerol).

The protein belongs to the Lgt family.

It localises to the cell inner membrane. It catalyses the reaction L-cysteinyl-[prolipoprotein] + a 1,2-diacyl-sn-glycero-3-phospho-(1'-sn-glycerol) = an S-1,2-diacyl-sn-glyceryl-L-cysteinyl-[prolipoprotein] + sn-glycerol 1-phosphate + H(+). It participates in protein modification; lipoprotein biosynthesis (diacylglyceryl transfer). In terms of biological role, catalyzes the transfer of the diacylglyceryl group from phosphatidylglycerol to the sulfhydryl group of the N-terminal cysteine of a prolipoprotein, the first step in the formation of mature lipoproteins. The polypeptide is Phosphatidylglycerol--prolipoprotein diacylglyceryl transferase (Aliivibrio salmonicida (strain LFI1238) (Vibrio salmonicida (strain LFI1238))).